A 251-amino-acid polypeptide reads, in one-letter code: Ubiquinone/menaquinone biosynthesis C-methyltransferase UbiE (251 aa).

S-adenosyl-L-methionine contacts are provided by residues Thr74, Asp95, and 123 to 124; that span reads NA.

Belongs to the class I-like SAM-binding methyltransferase superfamily. MenG/UbiE family.

It carries out the reaction a 2-demethylmenaquinol + S-adenosyl-L-methionine = a menaquinol + S-adenosyl-L-homocysteine + H(+). The catalysed reaction is a 2-methoxy-6-(all-trans-polyprenyl)benzene-1,4-diol + S-adenosyl-L-methionine = a 5-methoxy-2-methyl-3-(all-trans-polyprenyl)benzene-1,4-diol + S-adenosyl-L-homocysteine + H(+). The protein operates within quinol/quinone metabolism; menaquinone biosynthesis; menaquinol from 1,4-dihydroxy-2-naphthoate: step 2/2. It participates in cofactor biosynthesis; ubiquinone biosynthesis. In terms of biological role, methyltransferase required for the conversion of demethylmenaquinol (DMKH2) to menaquinol (MKH2) and the conversion of 2-polyprenyl-6-methoxy-1,4-benzoquinol (DDMQH2) to 2-polyprenyl-3-methyl-6-methoxy-1,4-benzoquinol (DMQH2). The chain is Ubiquinone/menaquinone biosynthesis C-methyltransferase UbiE from Shewanella piezotolerans (strain WP3 / JCM 13877).